The primary structure comprises 171 residues: UPF0763 protein KHP_0657 (171 aa).

It belongs to the UPF0763 family.

The sequence is that of UPF0763 protein KHP_0657 from Helicobacter pylori (strain 51).